The primary structure comprises 404 residues: Magnesium transporter NIPA4 (404 aa).

Residues 1 to 55 lie on the Extracellular side of the membrane; sequence MELRVSNTSCENGSLLHLYCSSQEVLCQIVNDLSPEVPSNATFHSWQERIRQNYG. N-linked (GlcNAc...) asparagine glycans are attached at residues N7, N12, and N40. A helical transmembrane segment spans residues 56–76; the sequence is FYIGLGLAFLSSFLIGSSVIL. Residues 77–102 lie on the Cytoplasmic side of the membrane; it reads KKKGLLRLVATGATRAVDGGFGYLKD. The chain crosses the membrane as a helical span at residues 103-123; sequence AMWWAGFLTMAAGEVANFGAY. A124 is a topological domain (extracellular). Residues 125 to 145 form a helical membrane-spanning segment; sequence FAPATVVTPLGALSVLISAIL. Residues 146–153 lie on the Cytoplasmic side of the membrane; sequence SSYFLRES. Residues 154-174 traverse the membrane as a helical segment; sequence LNLLGKLGCVICVAGSTVMVI. Residues 175–195 lie on the Extracellular side of the membrane; sequence HAPEEEKVTTIMEMASKMKDT. A helical transmembrane segment spans residues 196–216; sequence GFIVFAVLLLVSCLILIFVIA. Over 217 to 223 the chain is Cytoplasmic; sequence PRYGQRN. The helical transmembrane segment at 224–244 threads the bilayer; it reads ILIYIIICSVIGAFSVAAVKG. At 245-261 the chain is on the extracellular side; the sequence is LGITIKNFFQGLPVVRH. The chain crosses the membrane as a helical span at residues 262–282; sequence PLPYILSLILALSLSTQVNFL. The Cytoplasmic segment spans residues 283–293; the sequence is NRALDIFNTSL. Residues 294-314 form a helical membrane-spanning segment; the sequence is VFPIYYVFFTTVVVTSSIILF. Topologically, residues 315–324 are extracellular; sequence KEWYSMSAVD. The helical transmembrane segment at 325–345 threads the bilayer; that stretch reads IAGTLSGFVTIILGVFMLHAF. Topologically, residues 346-404 are cytoplasmic; the sequence is KDLDISCASLPHMHKNPPPSPAPEPTVIRLEDKNVLVDNIELASTSSPEEKPKVFIIHS.

It belongs to the NIPA family. Highly expressed in brain, lung, stomach, keratinocytes and leukocytes, and in all other tissues tested except liver, thyroid and fetal brain.

The protein resides in the cell membrane. It carries out the reaction Mg(2+)(in) = Mg(2+)(out). Functionally, acts as a Mg(2+) transporter. Can also transport other divalent cations such as Ba(2+), Sr(2+) and Fe(2+) but to a much less extent than Mg(2+). May be a receptor for ligands (trioxilins A3 and B3) from the hepoxilin pathway. The sequence is that of Magnesium transporter NIPA4 (NIPAL4) from Homo sapiens (Human).